The primary structure comprises 699 residues: Nucleolar and coiled-body phosphoprotein 1 (699 aa).

Positions 10–42 (VPSDLYPLVLGFLRDNQLSEVANKFAKATGATQ) constitute a LisH domain. Lys33 carries the post-translational modification N6-acetyllysine. The tract at residues 65–637 (ERKLQANGPV…VREEEIEVDS (573 aa)) is disordered. Residues Lys67 and Lys76 each participate in a glycyl lysine isopeptide (Lys-Gly) (interchain with G-Cter in SUMO2) cross-link. The Acidic serine cluster 1 repeat unit spans residues 84–95 (SSDSEDSSEEEE). Residues 84–566 (SSDSEDSSEE…GKAAKNSEEE (483 aa)) form an 11 X 12 AA approximate repeats of an acidic serine cluster region. A compositionally biased stretch (acidic residues) spans 86-97 (DSEDSSEEEEEV). Phosphoserine is present on residues Ser87, Ser90, and Ser91. At Ser91 the chain carries Diphosphoserine. Positions 100 to 110 (PPAKKAAVPAK) are enriched in low complexity. Residues 125 to 136 (ESSSSEESSDDD) form an Acidic serine cluster 2 repeat. Positions 144-159 (QPVQKGVKPQAKAAKA) are enriched in low complexity. One copy of the Acidic serine cluster 3 repeat lies at 167–178 (SDSDSDSSSEDE). Lys186 is covalently cross-linked (Glycyl lysine isopeptide (Lys-Gly) (interchain with G-Cter in SUMO2)). Thr188 is subject to Phosphothreonine. Lys193 participates in a covalent cross-link: Glycyl lysine isopeptide (Lys-Gly) (interchain with G-Cter in SUMO2). 2 stretches are compositionally biased toward low complexity: residues 193 to 227 (KAQT…SSSS) and 236 to 261 (AATP…TTPT). Positions 204 to 382 (RAAPKIANGK…DDEAPSKPAG (179 aa)) are interaction with RPA194. The Acidic serine cluster 4 repeat unit spans residues 221-232 (SSSSSSSDDSEE). An Acidic serine cluster 5 repeat occupies 264–275 (SSSSEDSSSDEE). Residues 291–301 (SVPPPSAPPPK) are compositionally biased toward pro residues. Positions 321–333 (SSEDSSDESDSSS) are enriched in acidic residues. Residues 325–336 (SSDESDSSSEEE) form an Acidic serine cluster 6 repeat. Glycyl lysine isopeptide (Lys-Gly) (interchain with G-Cter in SUMO2) cross-links involve residues Lys342 and Lys347. A phosphoserine mark is found at Ser362, Ser363, and Ser366. The stretch at 363–375 (SDSSDSDSSEDDE) is one Acidic serine cluster 7 repeat. A compositionally biased stretch (acidic residues) spans 366–375 (SDSDSSEDDE). A compositionally biased stretch (polar residues) spans 381–397 (AGTTKNSSNKPAVTTKS). Glycyl lysine isopeptide (Lys-Gly) (interchain with G-Cter in SUMO2) cross-links involve residues Lys390 and Lys396. Ser397 carries the post-translational modification Phosphoserine. Residues 398–409 (PAVKPAAAPKQP) show a composition bias toward low complexity. Residues Lys401 and Lys407 each participate in a glycyl lysine isopeptide (Lys-Gly) (interchain with G-Cter in SUMO2) cross-link. N6-acetyllysine; alternate is present on Lys415. A Glycyl lysine isopeptide (Lys-Gly) (interchain with G-Cter in SUMO1); alternate cross-link involves residue Lys415. A Glycyl lysine isopeptide (Lys-Gly) (interchain with G-Cter in SUMO2); alternate cross-link involves residue Lys415. Residues 425–436 (SSEEESSSSEEE) form an Acidic serine cluster 8 repeat. Residues Lys440 and Lys452 each participate in a glycyl lysine isopeptide (Lys-Gly) (interchain with G-Cter in SUMO2) cross-link. Composition is skewed to low complexity over residues 441–476 (MVAT…SDSS) and 498–523 (AGGA…SSSD). Position 456 is a phosphoserine (Ser456). An Acidic serine cluster 9 repeat occupies 470–481 (SSDSDSSSSEEE). Residue Lys505 forms a Glycyl lysine isopeptide (Lys-Gly) (interchain with G-Cter in SUMO2) linkage. Ser508 carries the post-translational modification Phosphoserine. One copy of the Acidic serine cluster 10 repeat lies at 519 to 529 (SSSSDDSSEEE). Ser538 carries the phosphoserine modification. Positions 547–556 (NGTSALTAQN) are enriched in polar residues. The Acidic serine cluster 11 repeat unit spans residues 555 to 566 (QNGKAAKNSEEE). Ser563 bears the Phosphoserine mark. A Glycyl lysine isopeptide (Lys-Gly) (interchain with G-Cter in SUMO1) cross-link involves residue Lys572. Residue Lys579 forms a Glycyl lysine isopeptide (Lys-Gly) (interchain with G-Cter in SUMO2) linkage. Phosphoserine occurs at positions 580 and 582. Lys604 participates in a covalent cross-link: Glycyl lysine isopeptide (Lys-Gly) (interchain with G-Cter in SUMO2). Phosphothreonine occurs at positions 607 and 610. Residue Lys613 forms a Glycyl lysine isopeptide (Lys-Gly) (interchain with G-Cter in SUMO2) linkage. Ser622 carries the post-translational modification Phosphoserine. A compositionally biased stretch (basic and acidic residues) spans 627-637 (RVREEEIEVDS). Ser643 carries the phosphoserine modification. Residue Lys647 forms a Glycyl lysine isopeptide (Lys-Gly) (interchain with G-Cter in SUMO2) linkage. Lys663 is subject to N6-acetyllysine; alternate. Residue Lys663 forms a Glycyl lysine isopeptide (Lys-Gly) (interchain with G-Cter in SUMO2); alternate linkage. Omega-N-methylarginine is present on Arg683. At Ser686 the chain carries Phosphoserine. Lys695 is covalently cross-linked (Glycyl lysine isopeptide (Lys-Gly) (interchain with G-Cter in SUMO2)). Residue Ser698 is modified to Phosphoserine.

This sequence belongs to the NOLC1 family. Heterodimer; heterodimerizes with TCOF1 following monoubiquitination. Interacts with RNA polymerase I 194 kDa subunit (RPA194) and with casein kinase-II. Interacts with DKC1/NAP57, NOP58 and fibrillarin. Undergoes rapid and massive phosphorylation/dephosphorylation cycles on CK2 and PKC sites. NOLC1 is one of the mostly phosphorylated proteins in the cell. Post-translationally, ubiquitinated. Monoubiquitination by the BCR(KBTBD8) complex promotes the formation of a NOLC1-TCOF1 complex that acts as a platform to connect RNA polymerase I with enzymes responsible for ribosomal processing and modification, leading to remodel the translational program of differentiating cells in favor of neural crest specification. In terms of processing, pyrophosphorylated by 5-diphosphoinositol pentakisphosphate (5-IP7). Serine pyrophosphorylation is achieved by Mg(2+)-dependent, but enzyme independent transfer of a beta-phosphate from a inositol pyrophosphate to a pre-phosphorylated serine residue.

The protein localises to the nucleus. It is found in the nucleolus. It localises to the cytoplasm. Its function is as follows. Nucleolar protein that acts as a regulator of RNA polymerase I by connecting RNA polymerase I with enzymes responsible for ribosomal processing and modification. Required for neural crest specification: following monoubiquitination by the BCR(KBTBD8) complex, associates with TCOF1 and acts as a platform to connect RNA polymerase I with enzymes responsible for ribosomal processing and modification, leading to remodel the translational program of differentiating cells in favor of neural crest specification. Involved in nucleologenesis, possibly by playing a role in the maintenance of the fundamental structure of the fibrillar center and dense fibrillar component in the nucleolus. It has intrinsic GTPase and ATPase activities. This is Nucleolar and coiled-body phosphoprotein 1 from Homo sapiens (Human).